Reading from the N-terminus, the 110-residue chain is MSNDDLNALKKLKEISSGTVKQITSLPKKEPQEEKMSKTLRIKNTTHEKIIEMYGKKVGSQGEVVDKGVAVLYALWKILPEEQFKRVVKLAEEDRFEEFADRLGIEIKEE.

This is an uncharacterized protein from Methanocaldococcus jannaschii (strain ATCC 43067 / DSM 2661 / JAL-1 / JCM 10045 / NBRC 100440) (Methanococcus jannaschii).